Reading from the N-terminus, the 250-residue chain is 5-oxoprolinase subunit A (250 aa).

It belongs to the LamB/PxpA family. In terms of assembly, forms a complex composed of PxpA, PxpB and PxpC.

The catalysed reaction is 5-oxo-L-proline + ATP + 2 H2O = L-glutamate + ADP + phosphate + H(+). Catalyzes the cleavage of 5-oxoproline to form L-glutamate coupled to the hydrolysis of ATP to ADP and inorganic phosphate. This is 5-oxoprolinase subunit A from Staphylococcus aureus (strain Mu3 / ATCC 700698).